Here is a 235-residue protein sequence, read N- to C-terminus: Proteasome subunit alpha (235 aa).

The protein belongs to the peptidase T1A family. In terms of assembly, the 20S proteasome core is composed of 14 alpha and 14 beta subunits that assemble into four stacked heptameric rings, resulting in a barrel-shaped structure. The two inner rings, each composed of seven catalytic beta subunits, are sandwiched by two outer rings, each composed of seven alpha subunits. The catalytic chamber with the active sites is on the inside of the barrel. Has a gated structure, the ends of the cylinder being occluded by the N-termini of the alpha-subunits. Is capped by the proteasome-associated ATPase, ARC.

It is found in the cytoplasm. Its pathway is protein degradation; proteasomal Pup-dependent pathway. The formation of the proteasomal ATPase ARC-20S proteasome complex, likely via the docking of the C-termini of ARC into the intersubunit pockets in the alpha-rings, may trigger opening of the gate for substrate entry. Interconversion between the open-gate and close-gate conformations leads to a dynamic regulation of the 20S proteasome proteolysis activity. Functionally, component of the proteasome core, a large protease complex with broad specificity involved in protein degradation. The sequence is that of Proteasome subunit alpha from Paenarthrobacter aurescens (strain TC1).